We begin with the raw amino-acid sequence, 449 residues long: Tubulin alpha-2 chain (449 aa).

Q11 contacts GTP. Residue K40 is modified to N6-acetyllysine. S140, G144, T145, T179, N206, and N228 together coordinate GTP. E254 is an active-site residue.

The protein belongs to the tubulin family. In terms of assembly, dimer of alpha and beta chains. A typical microtubule is a hollow water-filled tube with an outer diameter of 25 nm and an inner diameter of 15 nM. Alpha-beta heterodimers associate head-to-tail to form protofilaments running lengthwise along the microtubule wall with the beta-tubulin subunit facing the microtubule plus end conferring a structural polarity. Microtubules usually have 13 protofilaments but different protofilament numbers can be found in some organisms and specialized cells. Acetylation of alpha chains at Lys-40 stabilizes microtubules and affects affinity and processivity of microtubule motors. This modification has a role in multiple cellular functions, ranging from cell motility, cell cycle progression or cell differentiation to intracellular trafficking and signaling.

It localises to the cytoplasm. The protein localises to the cytoskeleton. The enzyme catalyses GTP + H2O = GDP + phosphate + H(+). Functionally, tubulin is the major constituent of microtubules, a cylinder consisting of laterally associated linear protofilaments composed of alpha- and beta-tubulin heterodimers. Microtubules grow by the addition of GTP-tubulin dimers to the microtubule end, where a stabilizing cap forms. Below the cap, tubulin dimers are in GDP-bound state, owing to GTPase activity of alpha-tubulin. The polypeptide is Tubulin alpha-2 chain (Stylonychia lemnae (Ciliate)).